Consider the following 486-residue polypeptide: Glutamyl-tRNA(Gln) amidotransferase subunit A (486 aa).

Residues Lys-76 and Ser-151 each act as charge relay system in the active site. Ser-175 acts as the Acyl-ester intermediate in catalysis.

It belongs to the amidase family. GatA subfamily. Heterotrimer of A, B and C subunits.

It catalyses the reaction L-glutamyl-tRNA(Gln) + L-glutamine + ATP + H2O = L-glutaminyl-tRNA(Gln) + L-glutamate + ADP + phosphate + H(+). Allows the formation of correctly charged Gln-tRNA(Gln) through the transamidation of misacylated Glu-tRNA(Gln) in organisms which lack glutaminyl-tRNA synthetase. The reaction takes place in the presence of glutamine and ATP through an activated gamma-phospho-Glu-tRNA(Gln). The chain is Glutamyl-tRNA(Gln) amidotransferase subunit A from Marinomonas sp. (strain MWYL1).